A 507-amino-acid chain; its full sequence is MSPNAPAVDIGAAPSLDTPEGDTKQPAEDHVEKDSNLVDWDGPDDPEHPQNLTRLRKWGITFSLASMTMWITFSSSVLSVATHPISEEYNVSTKVMPLATTLVIFGFALGPLCWAPLSELYGRRLPTFLGYGVFAIFQVPVAVAPNLQTIMVCRFFVGVFGSSALSVGPGVMADIWDPVDRGIATPFFFAANLLGPILGPIIGGFITESQLGWRWTAWLTLITSIFFGVLALLIVPETYSPVLLQQRASRLRRATQNQSLYSFLDQHRPTLAEFGYKYLARPFMMFLLEPILICFTVYLSLIYGILYLFLEAYPVAFAEERHWTNKGIAGLPFLGILVGMVLGIGIIIYNTRTRFARHLAEQGQVAPEERLVEMMLTSITMPIGLFWFGWAAHTHWMVQTIAGVPLGIGLFVLFMQGMNYLIDVYLTLSNSAIAANTLARSFLGGSFPLFATAMYHNLGVDWASTILGFISVAMVPIPFAFYIFGARIRAMSRYTVKAGNGIGPPIP.

Positions 1-50 are disordered; it reads MSPNAPAVDIGAAPSLDTPEGDTKQPAEDHVEKDSNLVDWDGPDDPEHPQ. Over residues 21-36 the composition is skewed to basic and acidic residues; that stretch reads GDTKQPAEDHVEKDSN. The N-linked (GlcNAc...) asparagine glycan is linked to N51. The helical transmembrane segment at 58 to 78 threads the bilayer; sequence WGITFSLASMTMWITFSSSVL. A glycan (N-linked (GlcNAc...) asparagine) is linked at N90. The next 5 membrane-spanning stretches (helical) occupy residues 95-115, 125-145, 155-175, 186-206, and 215-235; these read VMPL…LCWA, LPTF…AVAP, FFVG…MADI, PFFF…GGFI, and WTAW…LLIV. N257 carries N-linked (GlcNAc...) asparagine glycosylation. The next 6 membrane-spanning stretches (helical) occupy residues 290–310, 328–348, 371–391, 395–415, 442–462, and 466–486; these read PILI…YLFL, IAGL…GIII, LVEM…FGWA, HWMV…VLFM, FLGG…GVDW, and ILGF…IFGA.

It belongs to the major facilitator superfamily. CAR1 family.

The protein resides in the membrane. In terms of biological role, MFS-type transporter; part of the gene cluster that mediates the biosynthesis of aspcandine, a pyrrolobenzazepine alkaloid. The protein is MFS-type transporter acdC of Aspergillus candidus.